The chain runs to 144 residues: Large ribosomal subunit protein uL15 (144 aa).

Positions 1–56 are disordered; that stretch reads MELNNLKPAEGAKHAKRRVGRGIGSGLGKTAGRGHKGQKSRSGGFHKVGFEGGQMP. Residues 21-31 show a composition bias toward gly residues; that stretch reads RGIGSGLGKTA.

Belongs to the universal ribosomal protein uL15 family. In terms of assembly, part of the 50S ribosomal subunit.

Its function is as follows. Binds to the 23S rRNA. In Burkholderia mallei (strain NCTC 10247), this protein is Large ribosomal subunit protein uL15.